The following is a 94-amino-acid chain: Small ribosomal subunit protein uS19 (94 aa).

The interval 73 to 94 (EFSPTRRFGGHADKKSKKGQVK) is disordered.

The protein belongs to the universal ribosomal protein uS19 family.

In terms of biological role, protein S19 forms a complex with S13 that binds strongly to the 16S ribosomal RNA. This Kosmotoga olearia (strain ATCC BAA-1733 / DSM 21960 / TBF 19.5.1) protein is Small ribosomal subunit protein uS19.